A 464-amino-acid chain; its full sequence is UDP-N-acetylmuramoylalanine--D-glutamate ligase (464 aa).

112–118 serves as a coordination point for ATP; that stretch reads GTDGKTT.

This sequence belongs to the MurCDEF family.

It is found in the cytoplasm. It catalyses the reaction UDP-N-acetyl-alpha-D-muramoyl-L-alanine + D-glutamate + ATP = UDP-N-acetyl-alpha-D-muramoyl-L-alanyl-D-glutamate + ADP + phosphate + H(+). It participates in cell wall biogenesis; peptidoglycan biosynthesis. Its function is as follows. Cell wall formation. Catalyzes the addition of glutamate to the nucleotide precursor UDP-N-acetylmuramoyl-L-alanine (UMA). The sequence is that of UDP-N-acetylmuramoylalanine--D-glutamate ligase from Chlorobium chlorochromatii (strain CaD3).